A 425-amino-acid chain; its full sequence is WD repeat-containing protein jip5 (425 aa).

5 WD repeats span residues 9–48, 72–111, 117–158, 221–262, and 318–355; these read PLSADLFSQALHPKEPVVSVGLSSGHVQTFRLPTDEAASD, RHKGSCRCLTFGIDGETLYSAGTDGLIKAAKAETGVVENK, EKNG…SKVS, ISST…DQDE, and DETEGVIGLGFDVEGRMVTGGGQVVKVWHEAVVGADRY. Residues 40-63 form a disordered region; that stretch reads LPTDEAASDDDETSNASSRNGRGH. The tract at residues 358–425 is disordered; that stretch reads MPGEKRMYGD…LDSMESSVVY (68 aa). Positions 367 to 385 are enriched in acidic residues; it reads DSDDSDEGDDSDDDSDDSD. Over residues 395-404 the composition is skewed to basic residues; it reads NKRKKTKAKG.

The protein belongs to the WD repeat WDR55 family.

It is found in the nucleus. The protein resides in the nucleolus. The protein is WD repeat-containing protein jip5 (jip5) of Aspergillus niger (strain ATCC MYA-4892 / CBS 513.88 / FGSC A1513).